A 302-amino-acid polypeptide reads, in one-letter code: MPIVIPKKLPAFDTLKGENIFVMNKSRAFSQDIRPLKIVILNLMPNKIVTETQLLRLLGNTPLQIEITLLKTRTYASKNTSQDHLTSFYKTFEDIKNHTFDGLIITGAPIEHLQFEDVDYWEELKEVMEFSKSNVTSTMHICWGSQAGLYYHYGIPKFPTDKKIFGIFKHKIFNLKTKITRGFDDEFLVPHSRHTTVMRGDIENVPELEILAESEDAGICLVATRDRKHIFISGHLEYEKDTLKSEYFRDLDKGRSIDIPKNYFKDDNPENDPVVTWRAHAHLLFSNWLNYCVYQETPYILK.

Cysteine 142 acts as the Acyl-thioester intermediate in catalysis. Substrate is bound by residues lysine 163 and serine 192. Histidine 235 acts as the Proton acceptor in catalysis. Residue glutamate 237 is part of the active site. Substrate is bound at residue arginine 249.

Belongs to the MetA family.

The protein resides in the cytoplasm. The enzyme catalyses L-homoserine + acetyl-CoA = O-acetyl-L-homoserine + CoA. Its pathway is amino-acid biosynthesis; L-methionine biosynthesis via de novo pathway; O-acetyl-L-homoserine from L-homoserine: step 1/1. Its function is as follows. Transfers an acetyl group from acetyl-CoA to L-homoserine, forming acetyl-L-homoserine. The sequence is that of Homoserine O-acetyltransferase 1 from Ilyobacter polytropus (strain ATCC 51220 / DSM 2926 / LMG 16218 / CuHBu1).